We begin with the raw amino-acid sequence, 122 residues long: Large ribosomal subunit protein uL14 (122 aa).

It belongs to the universal ribosomal protein uL14 family. As to quaternary structure, part of the 50S ribosomal subunit. Forms a cluster with proteins L3 and L19. In the 70S ribosome, L14 and L19 interact and together make contacts with the 16S rRNA in bridges B5 and B8.

Binds to 23S rRNA. Forms part of two intersubunit bridges in the 70S ribosome. The sequence is that of Large ribosomal subunit protein uL14 from Ruegeria pomeroyi (strain ATCC 700808 / DSM 15171 / DSS-3) (Silicibacter pomeroyi).